A 787-amino-acid polypeptide reads, in one-letter code: Protein translocase subunit SecA (787 aa).

ATP contacts are provided by residues Q85, 103–107 (GEGKT), and D492.

The protein belongs to the SecA family. Monomer and homodimer. Part of the essential Sec protein translocation apparatus which comprises SecA, SecYEG and auxiliary proteins SecDF. Other proteins may also be involved.

The protein resides in the cell membrane. The protein localises to the cytoplasm. The enzyme catalyses ATP + H2O + cellular proteinSide 1 = ADP + phosphate + cellular proteinSide 2.. Its function is as follows. Part of the Sec protein translocase complex. Interacts with the SecYEG preprotein conducting channel. Has a central role in coupling the hydrolysis of ATP to the transfer of proteins into and across the cell membrane, serving as an ATP-driven molecular motor driving the stepwise translocation of polypeptide chains across the membrane. This Lacticaseibacillus casei (strain BL23) (Lactobacillus casei) protein is Protein translocase subunit SecA.